A 247-amino-acid polypeptide reads, in one-letter code: Granulin (247 aa).

This sequence belongs to the polyhedrin family.

Its function is as follows. Component of the virus occlusion bodies, which are large proteinaceous structures, that protect the virus from the outside environment for extended periods until they are ingested by insect larvae. The sequence is that of Granulin from Agrotis segetum granulosis virus (AsGV).